Here is a 4545-residue protein sequence, read N- to C-terminus: Prolow-density lipoprotein receptor-related protein 1 (4545 aa).

The N-terminal stretch at 1–19 (MLTPPLLLLLPLLSALVSG) is a signal peptide. The Extracellular segment spans residues 20-4424 (ATMDAPKTCS…SQQQPGHMAS (4405 aa)). LDL-receptor class A domains are found at residues 26-67 (KTCS…ICPQ) and 71-111 (QRCP…HCRE). Intrachain disulfides connect cysteine 28–cysteine 41, cysteine 35–cysteine 54, cysteine 48–cysteine 65, cysteine 73–cysteine 86, cysteine 80–cysteine 99, and cysteine 93–cysteine 109. Residues 112–150 (LRANCSRMGCQHHCVPTPSGPTCYCNSSFQLQADGKTCK) enclose the EGF-like 1 domain. A glycan (N-linked (GlcNAc...) asparagine) is linked at asparagine 115. 6 disulfides stabilise this stretch: cysteine 116–cysteine 125, cysteine 121–cysteine 134, cysteine 136–cysteine 149, cysteine 155–cysteine 165, cysteine 161–cysteine 174, and cysteine 176–cysteine 189. Asparagine 137 carries N-linked (GlcNAc...) asparagine glycosylation. One can recognise an EGF-like 2; calcium-binding domain in the interval 151-190 (DFDECSVYGTCSQLCTNTDGSFTCGCVEGYLLQPDNRSCK). 3 N-linked (GlcNAc...) asparagine glycosylation sites follow: asparagine 186, asparagine 240, and asparagine 275. 3 LDL-receptor class B repeats span residues 293–335 (GNFY…DPAM), 336–379 (GKVF…DLVS), and 380–423 (RLVY…FENY). Asparagine 358 carries an N-linked (GlcNAc...) asparagine glycan. Asparagine 447 carries an N-linked (GlcNAc...) asparagine glycan. Residues 475–521 (RSHACENDQYGKPGGCSDICLLANSHKARTCRCRSGFSLGSDGKSCK) form the EGF-like 3 domain. 3 disulfide bridges follow: cysteine 479–cysteine 494, cysteine 490–cysteine 505, and cysteine 507–cysteine 520. LDL-receptor class B repeat units lie at residues 572–614 (GFIY…DWMG), 615–660 (DNLY…DPLN), 661–711 (GWMY…DIPA), and 712–755 (GRLY…HGNY). An N-linked (GlcNAc...) asparagine glycan is attached at asparagine 730. The region spanning 804-844 (GTNKCRVNNGGCSSLCLATPGSRQCACAEDQVLDTDGVTCL) is the EGF-like 4 domain. Cystine bridges form between cysteine 808–cysteine 819, cysteine 815–cysteine 828, cysteine 830–cysteine 843, cysteine 855–cysteine 867, cysteine 862–cysteine 880, cysteine 874–cysteine 891, cysteine 896–cysteine 908, cysteine 903–cysteine 921, cysteine 915–cysteine 932, cysteine 937–cysteine 949, cysteine 944–cysteine 962, cysteine 956–cysteine 972, cysteine 977–cysteine 990, cysteine 985–cysteine 1003, cysteine 997–cysteine 1012, cysteine 1016–cysteine 1028, cysteine 1023–cysteine 1041, cysteine 1035–cysteine 1052, cysteine 1063–cysteine 1076, cysteine 1070–cysteine 1089, cysteine 1083–cysteine 1098, cysteine 1105–cysteine 1119, cysteine 1113–cysteine 1132, cysteine 1126–cysteine 1141, cysteine 1146–cysteine 1160, cysteine 1153–cysteine 1173, cysteine 1167–cysteine 1183, cysteine 1186–cysteine 1197, cysteine 1193–cysteine 1207, cysteine 1209–cysteine 1222, cysteine 1228–cysteine 1238, cysteine 1234–cysteine 1247, and cysteine 1249–cysteine 1262. LDL-receptor class A domains are found at residues 853-893 (PQCQ…LCHQ), 894-934 (HTCP…TCSA), 935-974 (RTCP…SCAY), 975-1014 (PTCF…GCSH), 1014-1054 (HSCS…NCTN), 1061-1100 (GGCH…SCEG), 1103-1143 (HVCD…NCEA), and 1144-1183 (LACR…GELC). The Ca(2+) site is built by tryptophan 872, aspartate 875, aspartate 877, aspartate 879, aspartate 885, and glutamate 886. Asparagine 929 carries N-linked (GlcNAc...) asparagine glycosylation. The Ca(2+) site is built by tryptophan 1033, aspartate 1036, aspartate 1038, aspartate 1040, aspartate 1046, and glutamate 1047. N-linked (GlcNAc...) asparagine glycosylation is present at asparagine 1051. Ca(2+) is bound by residues tryptophan 1081, aspartate 1084, aspartate 1086, aspartate 1088, aspartate 1094, and glutamate 1095. N-linked (GlcNAc...) asparagine glycans are attached at residues asparagine 1155 and asparagine 1156. EGF-like domains lie at 1184-1223 (DQCS…HTCQ) and 1224-1263 (IQSY…ESCR). N-linked (GlcNAc...) asparagine glycans are attached at residues asparagine 1196 and asparagine 1219. LDL-receptor class B repeat units follow at residues 1310–1356 (SALY…DWIA), 1357–1399 (GNIY…DPRD), 1400–1446 (GILF…DYLE), 1447–1491 (KRIL…YGGE), and 1492–1532 (VYWT…YHPS). An N-linked (GlcNAc...) asparagine glycan is attached at asparagine 1512. The 44-residue stretch at 1537-1580 (APNPCEANGGRGPCSHLCLINYNRTVSCACPHLMKLHKDNTTCY) folds into the EGF-like 7 domain. Cystine bridges form between cysteine 1541/cysteine 1554, cysteine 1550/cysteine 1564, and cysteine 1566/cysteine 1579. 4 N-linked (GlcNAc...) asparagine glycosylation sites follow: asparagine 1559, asparagine 1576, asparagine 1617, and asparagine 1646. 4 LDL-receptor class B repeats span residues 1628–1670 (QRVY…DWVS), 1671–1714 (RNLF…HPLR), 1715–1754 (GKLY…DFPE), and 1755–1799 (SKLY…MGDK). 4 N-linked (GlcNAc...) asparagine glycosylation sites follow: asparagine 1724, asparagine 1734, asparagine 1764, and asparagine 1826. The EGF-like 8 domain maps to 1847–1888 (GTNPCSVNNGDCSQLCLPTSETTRSCMCTAGYSLRSGQQACE). Cystine bridges form between cysteine 1851–cysteine 1862, cysteine 1858–cysteine 1872, and cysteine 1874–cysteine 1887. A glycan (N-linked (GlcNAc...) asparagine) is linked at asparagine 1934. LDL-receptor class B repeat units follow at residues 1935-1977 (DTIY…DWIA), 1978-2020 (GNIY…HPEK), 2021-2064 (GYLF…DYQG), and 2065-2108 (GKLY…FEDF). An N-linked (GlcNAc...) asparagine glycan is attached at asparagine 1996. Residue lysine 2010 is modified to N6-acetyllysine. The N-linked (GlcNAc...) asparagine glycan is linked to asparagine 2049. N-linked (GlcNAc...) asparagine glycans are attached at residues asparagine 2118 and asparagine 2128. Residues 2156-2196 (GTNVCAVANGGCQQLCLYRGGGQRACACAHGMLAEDGASCR) form the EGF-like 9 domain. 3 cysteine pairs are disulfide-bonded: cysteine 2160–cysteine 2171, cysteine 2167–cysteine 2181, and cysteine 2183–cysteine 2195. LDL-receptor class B repeat units lie at residues 2254–2295 (NRIF…HRGW), 2296–2344 (DTLY…DECQ), 2345–2389 (NLMF…DHRA), 2390–2432 (EKLY…YGEH), and 2433–2474 (IFWT…VAND). Asparagine 2473 is a glycosylation site (N-linked (GlcNAc...) asparagine). One can recognise an EGF-like 10 domain in the interval 2479 to 2519 (ELSPCRINNGGCQDLCLLTHQGHVNCSCRGGRILQEDFTCR). 3 disulfides stabilise this stretch: cysteine 2483/cysteine 2494, cysteine 2490/cysteine 2504, and cysteine 2506/cysteine 2518. N-linked (GlcNAc...) asparagine glycosylation is present at asparagine 2503. Asparagine 2522 carries N-linked (GlcNAc...) asparagine glycosylation. 7 consecutive LDL-receptor class A domains span residues 2523-2564 (SSCR…YCNS), 2565-2603 (RRCK…PCNK), 2604-2642 (TACG…NCSA), 2643-2691 (TDCS…DCPG), 2695-2733 (PRCP…HCNK), 2733-2772 (KFCS…HCEG), and 2773-2815 (KTCG…GCLY). Intrachain disulfides connect cysteine 2525–cysteine 2538, cysteine 2533–cysteine 2551, cysteine 2545–cysteine 2562, cysteine 2567–cysteine 2579, cysteine 2574–cysteine 2592, and cysteine 2586–cysteine 2601. Residue asparagine 2602 is glycosylated (N-linked (GlcNAc...) asparagine). 15 disulfide bridges follow: cysteine 2606-cysteine 2618, cysteine 2613-cysteine 2631, cysteine 2625-cysteine 2640, cysteine 2645-cysteine 2667, cysteine 2661-cysteine 2680, cysteine 2674-cysteine 2689, cysteine 2697-cysteine 2709, cysteine 2704-cysteine 2722, cysteine 2716-cysteine 2731, cysteine 2735-cysteine 2747, cysteine 2742-cysteine 2760, cysteine 2754-cysteine 2770, cysteine 2775-cysteine 2788, cysteine 2782-cysteine 2801, and cysteine 2795-cysteine 2813. 2 N-linked (GlcNAc...) asparagine glycosylation sites follow: asparagine 2621 and asparagine 2639. Asparagine 2816 carries N-linked (GlcNAc...) asparagine glycosylation. 3 consecutive LDL-receptor class A domains span residues 2817–2856 (STCD…ECEY), 2857–2900 (PTCG…HCTS), and 2903–2941 (HKCN…RGCH). 15 cysteine pairs are disulfide-bonded: cysteine 2819–cysteine 2831, cysteine 2826–cysteine 2844, cysteine 2838–cysteine 2854, cysteine 2859–cysteine 2871, cysteine 2866–cysteine 2885, cysteine 2879–cysteine 2898, cysteine 2905–cysteine 2918, cysteine 2913–cysteine 2931, cysteine 2925–cysteine 2940, cysteine 2945–cysteine 2957, cysteine 2953–cysteine 2966, cysteine 2968–cysteine 2981, cysteine 2987–cysteine 2997, cysteine 2993–cysteine 3006, and cysteine 3008–cysteine 3022. Residue asparagine 2906 is glycosylated (N-linked (GlcNAc...) asparagine). The 41-residue stretch at 2942-2982 (VNECLSRKLSGCSQDCEDLKIGFKCRCRPGFRLKDDGRTCA) folds into the EGF-like 11 domain. The region spanning 2983-3023 (DLDECSTTFPCSQLCINTHGSYKCLCVEGYAPRGGDPHSCK) is the EGF-like 12; calcium-binding domain. Asparagine 3049 and asparagine 3090 each carry an N-linked (GlcNAc...) asparagine glycan. LDL-receptor class B repeat units lie at residues 3070–3114 (QMIY…DWVG), 3115–3157 (GNLY…DVQN), 3158–3201 (GYLY…DYVT), 3202–3244 (ERIY…FEDY), and 3245–3285 (VYWT…FHAL). A glycan (N-linked (GlcNAc...) asparagine) is linked at asparagine 3265. Residues 3291–3332 (PNHPCKVNNGGCSNLCLLSPGGGHKCACPTNFYLGGDGRTCV) form the EGF-like 13 domain. 3 disulfides stabilise this stretch: cysteine 3295–cysteine 3306, cysteine 3302–cysteine 3316, and cysteine 3318–cysteine 3331. 11 consecutive LDL-receptor class A domains span residues 3333 to 3372 (SNCT…DCPE), 3373 to 3411 (FKCR…NCDI), 3412 to 3451 (HVCL…DCPE), 3452 to 3492 (VTCA…NCTQ), 3493 to 3534 (MTCG…ECDE), 3535 to 3573 (RTCE…SCTP), 3574 to 3612 (RPCS…DCTP), 3612 to 3650 (PRCD…ACGT), 3653 to 3693 (RTCP…ECAR), 3694 to 3734 (FICP…DCEP), and 3740 to 3779 (PHCK…DCSI). An N-linked (GlcNAc...) asparagine glycan is attached at asparagine 3334. 39 disulfide bridges follow: cysteine 3335/cysteine 3347, cysteine 3342/cysteine 3360, cysteine 3354/cysteine 3370, cysteine 3375/cysteine 3387, cysteine 3382/cysteine 3400, cysteine 3394/cysteine 3409, cysteine 3414/cysteine 3427, cysteine 3421/cysteine 3440, cysteine 3434/cysteine 3449, cysteine 3454/cysteine 3467, cysteine 3461/cysteine 3480, cysteine 3474/cysteine 3490, cysteine 3495/cysteine 3508, cysteine 3502/cysteine 3521, cysteine 3515/cysteine 3532, cysteine 3537/cysteine 3549, cysteine 3544/cysteine 3562, cysteine 3556/cysteine 3571, cysteine 3576/cysteine 3588, cysteine 3583/cysteine 3601, cysteine 3595/cysteine 3610, cysteine 3614/cysteine 3626, cysteine 3621/cysteine 3639, cysteine 3633/cysteine 3648, cysteine 3655/cysteine 3667, cysteine 3662/cysteine 3680, cysteine 3674/cysteine 3691, cysteine 3696/cysteine 3710, cysteine 3704/cysteine 3723, cysteine 3717/cysteine 3732, cysteine 3742/cysteine 3755, cysteine 3750/cysteine 3768, cysteine 3762/cysteine 3777, cysteine 3786/cysteine 3799, cysteine 3793/cysteine 3808, cysteine 3810/cysteine 3823, cysteine 3829/cysteine 3839, cysteine 3835/cysteine 3848, and cysteine 3850/cysteine 3861. Asparagine 3489 carries an N-linked (GlcNAc...) asparagine glycan. An N-linked (GlcNAc...) asparagine glycan is attached at asparagine 3663. 2 EGF-like domains span residues 3782-3824 (KLTS…PGCQ) and 3825-3862 (DINE…NTCK). An N-linked (GlcNAc...) asparagine glycan is attached at asparagine 3789. Residue asparagine 3840 is glycosylated (N-linked (GlcNAc...) asparagine). LDL-receptor class B repeat units follow at residues 3913 to 3955 (GRVY…HLNI), 3971 to 4013 (GNVY…DPLR), 4014 to 4057 (GTMY…DYHN), and 4058 to 4102 (ERLY…FEDY). Positions 3941-3944 (RHRR) match the Recognition site for proteolytical processing motif. Asparagine 3954 is a glycosylation site (N-linked (GlcNAc...) asparagine). Asparagine 4076 and asparagine 4126 each carry an N-linked (GlcNAc...) asparagine glycan. EGF-like domains are found at residues 4148 to 4184 (VTNP…GTCV), 4197 to 4233 (RPGT…DKCE), 4233 to 4269 (ELDQ…PKCT), 4269 to 4305 (TAQV…DRCQ), 4305 to 4341 (QYRQ…PRCE), 4341 to 4376 (EVNK…PSCL), and 4374 to 4410 (SCLT…PRCE). Intrachain disulfides connect cysteine 4152–cysteine 4161, cysteine 4157–cysteine 4170, cysteine 4172–cysteine 4183, cysteine 4201–cysteine 4211, cysteine 4205–cysteine 4221, cysteine 4223–cysteine 4232, cysteine 4237–cysteine 4247, cysteine 4241–cysteine 4257, cysteine 4259–cysteine 4268, cysteine 4273–cysteine 4283, cysteine 4277–cysteine 4293, cysteine 4295–cysteine 4304, cysteine 4309–cysteine 4319, cysteine 4313–cysteine 4329, cysteine 4331–cysteine 4340, cysteine 4345–cysteine 4353, and cysteine 4348–cysteine 4364. Asparagine 4180 carries an N-linked (GlcNAc...) asparagine glycan. 2 N-linked (GlcNAc...) asparagine glycosylation sites follow: asparagine 4279 and asparagine 4280. Residue asparagine 4365 is glycosylated (N-linked (GlcNAc...) asparagine). 4 disulfide bridges follow: cysteine 4366-cysteine 4375, cysteine 4378-cysteine 4388, cysteine 4382-cysteine 4398, and cysteine 4400-cysteine 4409. The chain crosses the membrane as a helical span at residues 4425–4445 (ILIPLLLLLLLLLVAGVVFWY). Topologically, residues 4446–4545 (KRRVRGAKGF…PEDEIGDPLA (100 aa)) are cytoplasmic. The interaction with MAFB stretch occupies residues 4446 to 4545 (KRRVRGAKGF…PEDEIGDPLA (100 aa)). Threonine 4461 bears the Phosphothreonine mark. An NPXY motif motif is present at residues 4503-4508 (FTNPVY). Tyrosine 4508 is modified (phosphotyrosine). A phosphoserine mark is found at serine 4518, serine 4521, and serine 4524.

This sequence belongs to the LDLR family. In terms of assembly, heterodimer of an 85-kDa membrane-bound carboxyl subunit and a non-covalently attached 515-kDa N-terminal subunit. Intracellular domain interacts with MAFB. Found in a complex with PID1/PCLI1, LRP1 and CUBNI. Interacts with SNX17, PID1/PCLI1, PDGF and CUBN. The intracellular domain interacts with SHC1, GULP1 and DAB1. Can weakly interact (via NPXY motif) with DAB2 (via PID domain); the interaction is enhanced by tyrosine phosphorylation of the NPXY motif. Interacts with MDK; promotes neuronal survival. Interacts with LRPAP1; this interaction is followed by rapid internalization. Interacts with uPA/PLAU and PAI1/SERPINE1, either individually or in complex with each other, leading to rapid endocytosis; this interaction is abolished in the presence of LRPAP1/RAP. Also interacts with tPA/PLAT alone or in complex with SERPINE1. Interacts with the urokinase receptor PLAUR; this interaction leads to PLAUR internalization and is impaired in the presence of SORL1. Interacts with PDGFB. Interacts with TAU/MAPT, leading to endocytosis; this interaction is reduced in the presence of LRPAP1/RAP. Interacts with IGFBP3. Interacts with ADGRG6. Phosphorylated on serine and threonine residues. Post-translationally, phosphorylated on tyrosine residues upon stimulation with PDGF. Tyrosine phosphorylation promotes interaction with SHC1. In terms of processing, cleaved into a 85 kDa membrane-spanning subunit (LRP-85) and a 515 kDa large extracellular domain (LRP-515) that remains non-covalently associated. Gamma-secretase-dependent cleavage of LRP-85 releases the intracellular domain from the membrane.

It localises to the cell membrane. Its subcellular location is the membrane. The protein resides in the coated pit. It is found in the golgi outpost. The protein localises to the cytoplasm. It localises to the cytoskeleton. Its subcellular location is the microtubule organizing center. The protein resides in the nucleus. Endocytic receptor involved in endocytosis and in phagocytosis of apoptotic cells. Required for early embryonic development. Involved in cellular lipid homeostasis. Involved in the plasma clearance of chylomicron remnants and activated LRPAP1 (alpha 2-macroglobulin), as well as the local metabolism of complexes between plasminogen activators and their endogenous inhibitors. Acts as an alpha-2-macroglobulin receptor. Acts as a TAU/MAPT receptor and controls the endocytosis of TAU/MAPT as well as its subsequent spread. May modulate cellular events, such as APP metabolism, kinase-dependent intracellular signaling, neuronal calcium signaling as well as neurotransmission. Also acts as a receptor for IGFBP3 to mediate cell growth inhibition. Its function is as follows. (Microbial infection) Functions as a receptor for Vibrio cholerae cholix toxin and for Pseudomonas aeruginosa exotoxin A. This is Prolow-density lipoprotein receptor-related protein 1 from Mus musculus (Mouse).